The sequence spans 423 residues: uncharacterized protein (423 aa).

Substrate-binding residues include Ser-51, Asp-138, and Asn-150. ATP contacts are provided by residues 170-171 (TD) and 214-220 (TGGMRTK). Residues 315–406 (KGAIIIDENS…EKIHDVLGYS (92 aa)) form the PUA domain.

This sequence belongs to the glutamate 5-kinase family.

It localises to the cytoplasm. This is an uncharacterized protein from Saccharomyces cerevisiae (strain ATCC 204508 / S288c) (Baker's yeast).